The primary structure comprises 85 residues: U4-theraphotoxin-Hhn1ad (85 aa).

A signal peptide spans methionine 1 to alanine 22. Residues glutamate 23–arginine 48 constitute a propeptide that is removed on maturation. Intrachain disulfides connect cysteine 52-cysteine 66, cysteine 56-cysteine 77, and cysteine 71-cysteine 82.

Belongs to the neurotoxin 12 (Hwtx-2) family. 02 (Hwtx-2) subfamily. As to expression, expressed by the venom gland.

It localises to the secreted. In terms of biological role, postsynaptic neurotoxin. This Cyriopagopus hainanus (Chinese bird spider) protein is U4-theraphotoxin-Hhn1ad.